Here is an 822-residue protein sequence, read N- to C-terminus: Calpain-3 (822 aa).

The segment at 1–36 (MPTVISASVAPRTGAEPMSPGPIAQAAQDKGTEAGG) is disordered. In terms of domain architecture, Calpain catalytic spans 74-418 (LFVDPEFPPD…FTKLEICNLT (345 aa)). Active-site residues include C129, H335, and N359. Residues 419–587 (ADALESDKLQ…KRNLSEEVEN (169 aa)) are domain III. Residues 588–650 (TISVDRPVKK…EPGNTDQESE (63 aa)) are linker. Residues 604–652 (IFVSDRANSNKELGVDQETEEGKDNTSPDKQAKSPQLEPGNTDQESEEQ) form a disordered region. The segment covering 623-635 (EEGKDNTSPDKQA) has biased composition (basic and acidic residues). EF-hand domains lie at 650-684 (EEQR…VVNK), 693-726 (FTLE…KKIK), 723-758 (KKIK…AGFH), and 788-822 (VRLE…TMYA). A domain IV region spans residues 651 to 822 (EQRQFRNIFR…LEWLQLTMYA (172 aa)). A663, D666, E668, E673, D706, D708, S710, R712, E717, D736, D738, S740, T742, E747, D801, D803, D805, and I807 together coordinate Ca(2+).

The protein belongs to the peptidase C2 family. Homodimer; via EF-hand domain 4. Interacts with TTN/titin. Interacts with CMYA5; this interaction, which results in CMYA5 proteolysis, may protect CAPN3 from autolysis. Interacts with SIMC1. Interacts with UTP25; the interaction is required for CAPN3 translocation to the nucleolus. In terms of tissue distribution, skeletal muscle.

The protein resides in the cytoplasm. It is found in the nucleus. Its subcellular location is the nucleolus. The enzyme catalyses Broad endopeptidase activity.. Its activity is regulated as follows. Activated by micromolar concentrations of calcium and inhibited by calpastatin. Calcium-regulated non-lysosomal thiol-protease. Proteolytically cleaves CTBP1. Mediates, with UTP25, the proteasome-independent degradation of p53/TP53. In Bos taurus (Bovine), this protein is Calpain-3 (CAPN3).